Consider the following 548-residue polypeptide: Membrane protein insertase YidC (548 aa).

The helical transmembrane segment at 6–26 (NLLIIALLFVSFMIWQAWEQD) threads the bilayer. The tract at residues 28-52 (NPQPQQQTTQTTTTAAGSAADQGVP) is disordered. Low complexity predominate over residues 29 to 41 (PQPQQQTTQTTTT). The next 4 helical transmembrane spans lie at 345–365 (KFIH…TFIV), 420–440 (LGGC…YYML), 458–478 (LSAQ…MFFI), and 499–519 (PVIF…YYIV).

This sequence belongs to the OXA1/ALB3/YidC family. Type 1 subfamily. In terms of assembly, interacts with the Sec translocase complex via SecD. Specifically interacts with transmembrane segments of nascent integral membrane proteins during membrane integration.

It localises to the cell inner membrane. In terms of biological role, required for the insertion and/or proper folding and/or complex formation of integral membrane proteins into the membrane. Involved in integration of membrane proteins that insert both dependently and independently of the Sec translocase complex, as well as at least some lipoproteins. Aids folding of multispanning membrane proteins. This Klebsiella pneumoniae subsp. pneumoniae (strain ATCC 700721 / MGH 78578) protein is Membrane protein insertase YidC.